The chain runs to 1148 residues: Phospholipid-transporting ATPase IB (1148 aa).

Residues 1-54 lie on the Cytoplasmic side of the membrane; that stretch reads MSRATSVGDQLDVPARTIYLNQPHLNKFCDNQISTAKYSVVTFLPRFLYEQIRR. Position 5 is a phosphothreonine (T5). A helical membrane pass occupies residues 55-75; sequence AANAFFLFIALLQQIPDVSPT. The Exoplasmic loop segment spans residues 76–79; it reads GRYT. Residues 80 to 100 traverse the membrane as a helical segment; the sequence is TLVPLIIILTIAGIKEIVEDF. Residues 101 to 276 lie on the Cytoplasmic side of the membrane; sequence KRHKADNAVN…SNVEKVTNVQ (176 aa). A helical membrane pass occupies residues 277–297; the sequence is ILVLFGILLVMALVSSVGALY. At 298–324 the chain is on the exoplasmic loop side; the sequence is WNGSQGGKNWYIKKMDATSDNFGYNLL. Residues 325–345 form a helical membrane-spanning segment; that stretch reads TFIILYNNLIPISLLVTLEVV. At 346 to 847 the chain is on the cytoplasmic side; that stretch reads KYTQALFINW…CILYCFYKNV (502 aa). D388 acts as the 4-aspartylphosphate intermediate in catalysis. Residues D388, K389, T390, E488, F529, K552, R585, T665, G666, D667, R755, and K761 each coordinate ATP. D388 contacts Mg(2+). T390 contributes to the Mg(2+) binding site. Position 781 (D781) interacts with Mg(2+). N784 and D785 together coordinate ATP. Mg(2+) is bound at residue D785. Residues 848-868 traverse the membrane as a helical segment; it reads VLYIIELWFAFVNGFSGQILF. Topologically, residues 869–870 are exoplasmic loop; the sequence is ER. A helical membrane pass occupies residues 871-891; that stretch reads WCIGLYNVIFTALPPFTLGIF. The Cytoplasmic portion of the chain corresponds to 892-919; it reads ERSCSQESMLRFPQLYKITQNAEGFNTK. Residues 920-940 form a helical membrane-spanning segment; that stretch reads VFWGHCINALVHSLILFWFPM. The Exoplasmic loop segment spans residues 941 to 957; that stretch reads KALEHDTVLANGHATDY. Residues 958–978 form a helical membrane-spanning segment; sequence LFVGNIVYTYVVVTVCLKAGL. Topologically, residues 979 to 988 are cytoplasmic; that stretch reads ETTAWTKFSH. Residues 989–1009 traverse the membrane as a helical segment; that stretch reads LAVWGSMLIWLVFFGIYSTIW. At 1010–1023 the chain is on the exoplasmic loop side; sequence PTIPIAPDMKGQAT. The chain crosses the membrane as a helical span at residues 1024–1044; it reads MVLSSAHFWLGLFLVPTACLI. The Cytoplasmic segment spans residues 1045–1148; sequence EDVAWRAAKH…DTTKQKSRKK (104 aa). The segment at 1102-1126 is disordered; that stretch reads PPTLFRGSSLQQSMPHGYAFSQEEH.

This sequence belongs to the cation transport ATPase (P-type) (TC 3.A.3) family. Type IV subfamily. As to quaternary structure, component of a P4-ATPase flippase complex which consists of a catalytic alpha subunit and an accessory beta subunit. Interacts with TMEM30A to form a flippase complex. It depends on Mg(2+) as a cofactor. As to expression, expressed in retinal photoreceptor cells and testis.

The protein resides in the membrane. The protein localises to the golgi apparatus membrane. It localises to the endosome membrane. Its subcellular location is the cell membrane. It is found in the photoreceptor outer segment membrane. The protein resides in the photoreceptor inner segment membrane. The enzyme catalyses ATP + H2O + phospholipidSide 1 = ADP + phosphate + phospholipidSide 2.. The catalysed reaction is a 1,2-diacyl-sn-glycero-3-phospho-L-serine(out) + ATP + H2O = a 1,2-diacyl-sn-glycero-3-phospho-L-serine(in) + ADP + phosphate + H(+). It carries out the reaction a 1,2-diacyl-sn-glycero-3-phosphoethanolamine(in) + ATP + H2O = a 1,2-diacyl-sn-glycero-3-phosphoethanolamine(out) + ADP + phosphate + H(+). ATPase activity is stimulated by phosphatidylserine (PS) and minimally by phosphatidylethanolamine (PE). ATPase activity is inhibited by N-ethylmaleimide (NEM) and vanadate. Flippase activity is inhibited by NEM and 1,2-dioleoyl-sn-glycero-3-phospho-L-serine (DOPS). Functionally, catalytic component of a P4-ATPase flippase complex which catalyzes the hydrolysis of ATP coupled to the transport of aminophospholipids from the outer to the inner leaflet of various membranes and ensures the maintenance of asymmetric distribution of phospholipids. Able to translocate phosphatidylserine, but not phosphatidylcholine. Phospholipid translocation seems also to be implicated in vesicle formation and in uptake of lipid signaling molecules. Reconstituted to liposomes, the ATP8A2:TMEM30A flippase complex predominantly transports phosphatidylserine (PS) and to a lesser extent phosphatidylethanolamine (PE). Phospholipid translocation is not associated with a countertransport of an inorganic ion or other charged substrate from the cytoplasmic side toward the exoplasm in connection with the phosphorylation from ATP. ATP8A2:TMEM30A may be involved in regulation of neurite outgrowth. Proposed to function in the generation and maintenance of phospholipid asymmetry in photoreceptor disk membranes and neuronal axon membranes. May be involved in vesicle trafficking in neuronal cells. Required for normal visual and auditory function; involved in photoreceptor and inner ear spiral ganglion cell survival. This is Phospholipid-transporting ATPase IB from Bos taurus (Bovine).